An 890-amino-acid polypeptide reads, in one-letter code: Translation initiation factor IF-2 (890 aa).

Residues 45 to 303 (LIDHLNQKNS…SLQQGFQKPA (259 aa)) form a disordered region. Positions 67-81 (STLNIPGTGGKSKSV) are enriched in polar residues. Over residues 92–217 (VKRDPQEAER…RMAEENKWTD (126 aa)) the composition is skewed to basic and acidic residues. Basic residues predominate over residues 252-266 (GRGRNAKAARPKKGN). The span at 267–280 (KHAESKADREEARA) shows a compositional bias: basic and acidic residues. Residues 389–558 (PRAPVVTIMG…LLQAEVLELK (170 aa)) enclose the tr-type G domain. The segment at 398–405 (GHVDHGKT) is G1. 398-405 (GHVDHGKT) contributes to the GTP binding site. Positions 423–427 (GITQH) are G2. The interval 444 to 447 (DTPG) is G3. Residues 444 to 448 (DTPGH) and 498 to 501 (NKID) each bind GTP. The tract at residues 498–501 (NKID) is G4. Residues 534-536 (SAK) are G5. Lys-808 bears the N6-acetyllysine mark.

The protein belongs to the TRAFAC class translation factor GTPase superfamily. Classic translation factor GTPase family. IF-2 subfamily.

It localises to the cytoplasm. In terms of biological role, one of the essential components for the initiation of protein synthesis. Protects formylmethionyl-tRNA from spontaneous hydrolysis and promotes its binding to the 30S ribosomal subunits. Also involved in the hydrolysis of GTP during the formation of the 70S ribosomal complex. The protein is Translation initiation factor IF-2 of Shigella boydii serotype 18 (strain CDC 3083-94 / BS512).